The following is an 815-amino-acid chain: Vacuolar proton translocating ATPase 100 kDa subunit (815 aa).

The Cytoplasmic segment spans residues 1 to 402; the sequence is MSFLRPSIWR…NAYGIAHYRE (402 aa). Residues 403-421 form a helical membrane-spanning segment; that stretch reads VNPAVLTIVTFPFLFGVMF. The Vacuolar segment spans residues 422–423; that stretch reads GD. A helical transmembrane segment spans residues 424-440; sequence VGHGALLLLSALGLISL. Residues 441–454 are Cytoplasmic-facing; it reads EKKLAGKKLNELIQ. The chain crosses the membrane as a helical span at residues 455–484; that stretch reads MPFDGRYVLFLMSLFSIYVGFIYNECFSIP. Residues 485-530 are Vacuolar-facing; sequence MNIFGSQYNLNSTTGLYTYQHTDRVYPVGVDPLWKGAPNELVYYNS. Residues 531–550 traverse the membrane as a helical segment; the sequence is FKMKLSIIFGVVQMSVGICF. At 551-571 the chain is on the cytoplasmic side; sequence SLLNYLNQKGPIKIVNILTQF. Residues 572-592 traverse the membrane as a helical segment; sequence VPQMIFLWSIFGYMSVLIILK. At 593 to 639 the chain is on the vacuolar side; sequence WVVPYRSFEVDKVDPPFILPTIIAMFLSPGGTPDVVFFSGQGAVQTA. A helical membrane pass occupies residues 640–659; sequence LLFLALISIPVMLVIKPLFM. The Cytoplasmic segment spans residues 660 to 706; that stretch reads KRFHFQEVERKKLGHHEEEHDDEALYTGHHGEEFEMGEVFVHQVIHT. A helical transmembrane segment spans residues 707–731; sequence IEFVLGAVSNTASYLRLWALSLAHS. The Vacuolar segment spans residues 732–749; the sequence is ELSSVFWERILIGQVERG. Residues 750-788 form a helical membrane-spanning segment; it reads NPFLAFVGFGAWLGASVAVLLLMESLSAFLHALRLHWVE. Residues 789–815 lie on the Cytoplasmic side of the membrane; it reads FQNKFYIGDGVRFIPYSATRILSEDDE.

It belongs to the V-ATPase 116 kDa subunit family. The V-ATPase is a heteromultimeric enzyme.

The protein localises to the cytoplasmic vesicle membrane. Its subcellular location is the endosome membrane. The protein resides in the vacuole membrane. It is found in the lysosome membrane. In terms of biological role, essential component of the vacuolar proton pump (V-ATPase), a multimeric enzyme that catalyzes the translocation of protons across the membranes. Required for assembly and activity of the V-ATPase. Required in both the contractile vacuole system and the endosomal/lysosomal system. Also required for cytosolic pH regulation. This is Vacuolar proton translocating ATPase 100 kDa subunit (vatM) from Dictyostelium discoideum (Social amoeba).